Consider the following 257-residue polypeptide: NH(3)-dependent NAD(+) synthetase (257 aa).

28–35 provides a ligand contact to ATP; sequence GISGGVDS. D34 is a binding site for Mg(2+). Position 109 (R109) interacts with deamido-NAD(+). T129 contacts ATP. Position 134 (E134) interacts with Mg(2+). Deamido-NAD(+)-binding residues include K142 and D149. K158 and S180 together coordinate ATP. Residue 240-241 participates in deamido-NAD(+) binding; it reads HK.

Belongs to the NAD synthetase family. In terms of assembly, homodimer.

It carries out the reaction deamido-NAD(+) + NH4(+) + ATP = AMP + diphosphate + NAD(+) + H(+). It participates in cofactor biosynthesis; NAD(+) biosynthesis; NAD(+) from deamido-NAD(+) (ammonia route): step 1/1. In terms of biological role, catalyzes the ATP-dependent amidation of deamido-NAD to form NAD. Uses ammonia as a nitrogen source. In Pyrococcus furiosus (strain ATCC 43587 / DSM 3638 / JCM 8422 / Vc1), this protein is NH(3)-dependent NAD(+) synthetase.